A 416-amino-acid polypeptide reads, in one-letter code: FBD-associated F-box protein At3g52670 (416 aa).

One can recognise an F-box domain in the interval 9-62 (EDRMNQLPEDLILRILSFLPTELVIATSVLSKQWRSLWKLVPNLEFDSDDYESE). Residues 327-378 (KWNEPKYVPECLLSHLETFVWIRYDWEREEEKEVATYILRNARWLKKGTIST) form the FBD domain.

This Arabidopsis thaliana (Mouse-ear cress) protein is FBD-associated F-box protein At3g52670.